A 1045-amino-acid chain; its full sequence is V(D)J recombination-activating protein 1 (1045 aa).

Disordered stretches follow at residues 33–55, 67–87, and 222–253; these read ERRPSEEETEGSEVSYNSSQETY, LGSAPQSPTNFKPQQSEKSNV, and KRKSAPQLNPHKMKKRKRGPEFVKKSKTSSGN. Composition is skewed to polar residues over residues 44–55 and 69–87; these read SEVSYNSSQETY and SAPQSPTNFKPQQSEKSNV. 15 residues coordinate Zn(2+): Cys270, His274, Cys294, Cys297, His299, Cys309, His311, Cys314, Cys317, Cys329, Cys332, Cys359, Cys364, His376, and His380. Residues 294-333 form an RING-type zinc finger; the sequence is CLVCEHILSDPVQTSCKHLFCRICILKYIKLMGCYCPSCK. The RAG1-type zinc-finger motif lies at 355–384; it reads LLLKCTVSGCDEEISLGKYSHHISKHKETK. A DNA-binding region (NBD) is located at residues 395–462; sequence GGRPRQHLLT…QADELEAIME (68 aa). A divalent metal cation is bound by residues Asp606, Asp714, and Glu968.

Belongs to the RAG1 family. In terms of assembly, homodimer. Component of the RAG complex composed of core components rag1 and rag2. Mg(2+) serves as cofactor. The cofactor is Mn(2+). As to expression, expressed within the thymus, liver and spleen in juvenile frogs, and within the thymus and bone marrow of adults.

It is found in the nucleus. It carries out the reaction S-ubiquitinyl-[E2 ubiquitin-conjugating enzyme]-L-cysteine + [acceptor protein]-L-lysine = [E2 ubiquitin-conjugating enzyme]-L-cysteine + N(6)-ubiquitinyl-[acceptor protein]-L-lysine.. Functionally, catalytic component of the RAG complex, a multiprotein complex that mediates the DNA cleavage phase during V(D)J recombination. V(D)J recombination assembles a diverse repertoire of immunoglobulin and T-cell receptor genes in developing B and T lymphocytes through rearrangement of different V (variable), in some cases D (diversity), and J (joining) gene segments. In the RAG complex, RAG1 mediates the DNA-binding to the conserved recombination signal sequences (RSS) and catalyzes the DNA cleavage activities by introducing a double-strand break between the RSS and the adjacent coding segment. RAG2 is not a catalytic component but is required for all known catalytic activities. DNA cleavage occurs in 2 steps: a first nick is introduced in the top strand immediately upstream of the heptamer, generating a 3'-hydroxyl group that can attack the phosphodiester bond on the opposite strand in a direct transesterification reaction, thereby creating 4 DNA ends: 2 hairpin coding ends and 2 blunt, 5'-phosphorylated ends. In addition to its endonuclease activity, RAG1 also acts as an E3 ubiquitin-protein ligase that mediates monoubiquitination of histone H3. Histone H3 monoubiquitination is required for the joining step of V(D)J recombination. The polypeptide is V(D)J recombination-activating protein 1 (rag1) (Xenopus laevis (African clawed frog)).